Reading from the N-terminus, the 303-residue chain is Bidirectional sugar transporter SWEET14 (303 aa).

At 1-9 the chain is on the extracellular side; that stretch reads MAGMSLQHP. Residues 10–30 traverse the membrane as a helical segment; sequence WAFAFGLLGNIISFMTYLAPL. The region spanning 13–98 is the MtN3/slv 1 domain; sequence AFGLLGNIIS…AVYLVYAPKK (86 aa). The Cytoplasmic segment spans residues 31-44; the sequence is PTFYRIYKSKSTQG. A helical transmembrane segment spans residues 45–65; that stretch reads FQSVPYVVALFSAMLWIYYAL. Residues 66–72 are Extracellular-facing; the sequence is LKSDECL. Residues 73 to 93 traverse the membrane as a helical segment; it reads LITINSAGCVIETIYIAVYLV. Topologically, residues 94-105 are cytoplasmic; sequence YAPKKAKMFTAK. Residues 106 to 126 form a helical membrane-spanning segment; that stretch reads LLLLVNVGVFGLILLLTLLLS. Residues 127–133 lie on the Extracellular side of the membrane; sequence AGDRRIV. A helical transmembrane segment spans residues 134–154; it reads VLGWVCVGFSVSVFVAPLSII. One can recognise a MtN3/slv 2 domain in the interval 134 to 217; sequence VLGWVCVGFS…MGLYAMYRNS (84 aa). Over 155-167 the chain is Cytoplasmic; that stretch reads RLVVRTKSVEFMP. The chain crosses the membrane as a helical span at residues 168-188; the sequence is FSLSFSLTISAVVWFLYGLLI. The Extracellular portion of the chain corresponds to 189-192; it reads KDKY. Residues 193–213 traverse the membrane as a helical segment; it reads VALPNVLGFSFGVIQMGLYAM. Residues 214–303 lie on the Cytoplasmic side of the membrane; it reads YRNSTPKAVL…AGAGEKKVAA (90 aa). The segment at 266-290 is disordered; that stretch reads HPVDVESPPAEAPPQEDDKAAAATA.

This sequence belongs to the SWEET sugar transporter family. As to quaternary structure, forms homooligomers and/or heterooligomers.

The protein resides in the cell membrane. Functionally, mediates both low-affinity uptake and efflux of sugar across the plasma membrane. In Oryza sativa subsp. indica (Rice), this protein is Bidirectional sugar transporter SWEET14 (SWEET14).